A 515-amino-acid chain; its full sequence is Methionine--tRNA ligase (515 aa).

The short motif at 13–23 (AYPNGKPHIGH) is the 'HIGH' region element. A 'KMSKS' region motif is present at residues 300–304 (KMSKS). An ATP-binding site is contributed by K303.

Belongs to the class-I aminoacyl-tRNA synthetase family. MetG type 2B subfamily. Monomer.

It is found in the cytoplasm. The enzyme catalyses tRNA(Met) + L-methionine + ATP = L-methionyl-tRNA(Met) + AMP + diphosphate. Functionally, is required not only for elongation of protein synthesis but also for the initiation of all mRNA translation through initiator tRNA(fMet) aminoacylation. This Brucella suis biovar 1 (strain 1330) protein is Methionine--tRNA ligase.